A 223-amino-acid chain; its full sequence is Adenylate kinase (223 aa).

Residue 10–15 coordinates ATP; it reads GSGKGT. Residues 30–59 are NMP; the sequence is ESGAIFREHIGGGTELGKQAKAFIERGDLV. Residues Ser31, Arg36, 57-59, 84-87, and Gln91 each bind AMP; these read DLV and GFPR. Residues 125-164 form an LID region; it reads GRRLCKNDNNHPNNIFIDAIKPNGDVCRVCGGELSARSDD. Residue Arg126 participates in ATP binding. Residues Arg161 and Arg173 each coordinate AMP. Gly209 lines the ATP pocket.

Belongs to the adenylate kinase family. Monomer.

Its subcellular location is the cytoplasm. It carries out the reaction AMP + ATP = 2 ADP. The protein operates within purine metabolism; AMP biosynthesis via salvage pathway; AMP from ADP: step 1/1. Its function is as follows. Catalyzes the reversible transfer of the terminal phosphate group between ATP and AMP. Plays an important role in cellular energy homeostasis and in adenine nucleotide metabolism. This chain is Adenylate kinase, found in Nitratidesulfovibrio vulgaris (strain ATCC 29579 / DSM 644 / CCUG 34227 / NCIMB 8303 / VKM B-1760 / Hildenborough) (Desulfovibrio vulgaris).